A 511-amino-acid chain; its full sequence is Arabinose import ATP-binding protein AraG (511 aa).

2 ABC transporter domains span residues leucine 5–arginine 240 and arginine 240–arginine 501. Glycine 37–serine 44 contributes to the ATP binding site.

It belongs to the ABC transporter superfamily. Arabinose importer (TC 3.A.1.2.2) family. As to quaternary structure, the complex is composed of two ATP-binding proteins (AraG), two transmembrane proteins (AraH) and a solute-binding protein (AraF).

Its subcellular location is the cell inner membrane. The enzyme catalyses L-arabinose(out) + ATP + H2O = L-arabinose(in) + ADP + phosphate + H(+). Functionally, part of the ABC transporter complex AraFGH involved in arabinose import. Responsible for energy coupling to the transport system. The chain is Arabinose import ATP-binding protein AraG from Ralstonia nicotianae (strain ATCC BAA-1114 / GMI1000) (Ralstonia solanacearum).